Here is a 462-residue protein sequence, read N- to C-terminus: Ribosomal protein uS12 methylthiotransferase RimO (462 aa).

The MTTase N-terminal domain maps to 22–133; that stretch reads ASVAFLHLGC…IIEVLQRVRQ (112 aa). Residues C31, C67, C96, C171, C175, and C178 each contribute to the [4Fe-4S] cluster site. Residues 157–386 form the Radical SAM core domain; that stretch reads TTGRFVSYLK…VAIQQPISAA (230 aa). In terms of domain architecture, TRAM spans 389–460; sequence QALIGQTVDV…LYDLTGEINH (72 aa).

Belongs to the methylthiotransferase family. RimO subfamily. The cofactor is [4Fe-4S] cluster.

The protein localises to the cytoplasm. It catalyses the reaction L-aspartate(89)-[ribosomal protein uS12]-hydrogen + (sulfur carrier)-SH + AH2 + 2 S-adenosyl-L-methionine = 3-methylsulfanyl-L-aspartate(89)-[ribosomal protein uS12]-hydrogen + (sulfur carrier)-H + 5'-deoxyadenosine + L-methionine + A + S-adenosyl-L-homocysteine + 2 H(+). In terms of biological role, catalyzes the methylthiolation of an aspartic acid residue of ribosomal protein uS12. This Prochlorococcus marinus (strain MIT 9211) protein is Ribosomal protein uS12 methylthiotransferase RimO.